Consider the following 385-residue polypeptide: 1-deoxy-D-xylulose 5-phosphate reductoisomerase (385 aa).

Residues T10, G11, S12, I13, K37, and N124 each coordinate NADPH. K125 contacts 1-deoxy-D-xylulose 5-phosphate. E126 serves as a coordination point for NADPH. Position 150 (D150) interacts with Mn(2+). Residues S151, E152, S176, and H199 each coordinate 1-deoxy-D-xylulose 5-phosphate. E152 provides a ligand contact to Mn(2+). Residue G205 coordinates NADPH. S212, N217, K218, and E221 together coordinate 1-deoxy-D-xylulose 5-phosphate. Position 221 (E221) interacts with Mn(2+).

The protein belongs to the DXR family. The cofactor is Mg(2+). It depends on Mn(2+) as a cofactor.

It carries out the reaction 2-C-methyl-D-erythritol 4-phosphate + NADP(+) = 1-deoxy-D-xylulose 5-phosphate + NADPH + H(+). The protein operates within isoprenoid biosynthesis; isopentenyl diphosphate biosynthesis via DXP pathway; isopentenyl diphosphate from 1-deoxy-D-xylulose 5-phosphate: step 1/6. Catalyzes the NADPH-dependent rearrangement and reduction of 1-deoxy-D-xylulose-5-phosphate (DXP) to 2-C-methyl-D-erythritol 4-phosphate (MEP). This is 1-deoxy-D-xylulose 5-phosphate reductoisomerase from Clostridium botulinum (strain Okra / Type B1).